A 754-amino-acid chain; its full sequence is LON peptidase N-terminal domain and RING finger protein 2 (754 aa).

TPR repeat units follow at residues 23-58 (IAQRLEEGDEAFRAGDYEMAAELFRSMLAGLAQPDR) and 59-91 (GLCLRLGDALARAGRLPEALGAFRGAARLGALR). The disordered stretch occupies residues 112–136 (PLSAENPGGEPEAPGEGGPAPEPRA). The span at 115–125 (AENPGGEPEAP) shows a compositional bias: low complexity. 3 TPR repeats span residues 197–230 (LRRLAGQARSLQRQQQPEAALLRCDQALELAPDD), 231–264 (NSLLLLRAELYLTMKNYEQALQDASAACQNEPLL), and 266–298 (KGHQVKAQALSGLGRSKEVLKEFLYCLALNPEC). The segment at 398–439 (GLKRQFPDDVEDAPDLNAPGKIPKKDLSLQRSPNSETEESQG) is disordered. The segment covering 426-439 (LQRSPNSETEESQG) has biased composition (polar residues). A TPR 6 repeat occupies 447–483 (FECALCMRLLFEPVTTPCGHTFCLKCLERCLDHAPHC). The RING-type zinc finger occupies 449–487 (CALCMRLLFEPVTTPCGHTFCLKCLERCLDHAPHCPLCK). The Lon N-terminal domain occupies 528-737 (MSELSNLTRD…AIRRILVIIT (210 aa)).

The chain is LON peptidase N-terminal domain and RING finger protein 2 (LONRF2) from Homo sapiens (Human).